The chain runs to 1818 residues: Cytadherence high molecular weight protein 2 (1818 aa).

Coiled-coil stretches lie at residues 31-880 (LESA…KQRE), 919-1607 (ELKI…DNKH), 1644-1755 (HLFE…QAVQ), and 1786-1817 (LATQ…QKAA).

Phosphorylated mainly on serine residues.

Component of the cytoskeleton-like structure which stabilizes the shape of the wall-less Mycoplasma. This cytoskeleton-like network of accessory proteins containing HMW proteins 1 to 5 allows the proper anchoring of cytadhesin proteins in the mycoplasmal membrane at the attachment organelle. This chain is Cytadherence high molecular weight protein 2 (hmw2), found in Mycoplasma pneumoniae (strain ATCC 29342 / M129 / Subtype 1) (Mycoplasmoides pneumoniae).